The chain runs to 877 residues: Alanine--tRNA ligase (877 aa).

Residues His-567, His-571, Cys-669, and His-673 each contribute to the Zn(2+) site.

Belongs to the class-II aminoacyl-tRNA synthetase family. Zn(2+) is required as a cofactor.

It localises to the cytoplasm. The enzyme catalyses tRNA(Ala) + L-alanine + ATP = L-alanyl-tRNA(Ala) + AMP + diphosphate. Catalyzes the attachment of alanine to tRNA(Ala) in a two-step reaction: alanine is first activated by ATP to form Ala-AMP and then transferred to the acceptor end of tRNA(Ala). Also edits incorrectly charged Ser-tRNA(Ala) and Gly-tRNA(Ala) via its editing domain. The polypeptide is Alanine--tRNA ligase (Rickettsia prowazekii (strain Madrid E)).